Here is a 452-residue protein sequence, read N- to C-terminus: Cell division protein FtsZ (452 aa).

Residues 24-28, 111-113, E142, R146, and D190 contribute to the GTP site; these read GAGSN and GTG.

This sequence belongs to the FtsZ family. Homodimer. Polymerizes to form a dynamic ring structure in a strictly GTP-dependent manner. Interacts directly with several other division proteins.

The protein localises to the cytoplasm. Its function is as follows. Essential cell division protein that forms a contractile ring structure (Z ring) at the future cell division site. The regulation of the ring assembly controls the timing and the location of cell division. One of the functions of the FtsZ ring is to recruit other cell division proteins to the septum to produce a new cell wall between the dividing cells. Binds GTP and shows GTPase activity. The sequence is that of Cell division protein FtsZ from Rickettsia prowazekii (strain Madrid E).